An 85-amino-acid chain; its full sequence is Small ribosomal subunit protein bS16c (85 aa).

The protein belongs to the bacterial ribosomal protein bS16 family.

The protein resides in the plastid. It localises to the chloroplast. The sequence is that of Small ribosomal subunit protein bS16c from Nicotiana tabacum (Common tobacco).